An 866-amino-acid polypeptide reads, in one-letter code: Protein translocase subunit SecA (866 aa).

ATP-binding positions include Q87, 105–109, and D514; that span reads GEGKT. The tract at residues 819–858 is disordered; sequence VSPIGTPSSEGGGETSGADTYSNKKIGRNDPCPCGSGKKY. Residues C850, C852, C861, and C862 each coordinate Zn(2+).

It belongs to the SecA family. In terms of assembly, monomer and homodimer. Part of the essential Sec protein translocation apparatus which comprises SecA, SecYEG and auxiliary proteins SecDF. Other proteins may also be involved. The cofactor is Zn(2+).

It localises to the cell inner membrane. The protein localises to the cytoplasm. It carries out the reaction ATP + H2O + cellular proteinSide 1 = ADP + phosphate + cellular proteinSide 2.. Functionally, part of the Sec protein translocase complex. Interacts with the SecYEG preprotein conducting channel. Has a central role in coupling the hydrolysis of ATP to the transfer of proteins into and across the cell membrane, serving as an ATP-driven molecular motor driving the stepwise translocation of polypeptide chains across the membrane. This Elusimicrobium minutum (strain Pei191) protein is Protein translocase subunit SecA.